We begin with the raw amino-acid sequence, 275 residues long: TATA-box-binding protein (275 aa).

Disordered stretches follow at residues 23-45 (EDES…FGMN) and 73-92 (GSMS…HTPA). 2 repeat units span residues 103–179 (LENI…ARIV) and 193–270 (IQNM…YPIL).

It belongs to the TBP family. In terms of assembly, belongs to the TFIID complex together with the TBP-associated factors (TAFs). Binds DNA as monomer.

It is found in the nucleus. Its function is as follows. General transcription factor that functions at the core of the DNA-binding multiprotein factor TFIID. Binding of TFIID to the TATA box is the initial transcriptional step of the pre-initiation complex (PIC), playing a role in the activation of eukaryotic genes transcribed by RNA polymerase II. This Artemia franciscana (Brine shrimp) protein is TATA-box-binding protein.